A 243-amino-acid chain; its full sequence is Probable intron-encoded endonuclease aI3 (243 aa).

Belongs to the LAGLIDADG endonuclease family.

Its subcellular location is the mitochondrion. In terms of biological role, mitochondrial DNA endonuclease involved in intron homing. In Dictyostelium citrinum (Slime mold), this protein is Probable intron-encoded endonuclease aI3 (aI3).